A 147-amino-acid polypeptide reads, in one-letter code: Large ribosomal subunit protein uL15 (147 aa).

The tract at residues 21–49 is disordered; the sequence is RVGRGEGSKGKTAGRGTKGTKARAPVRPG.

The protein belongs to the universal ribosomal protein uL15 family. In terms of assembly, part of the 50S ribosomal subunit.

Functionally, binds to the 23S rRNA. This Tropheryma whipplei (strain TW08/27) (Whipple's bacillus) protein is Large ribosomal subunit protein uL15.